Reading from the N-terminus, the 179-residue chain is Ribulose bisphosphate carboxylase small subunit, chloroplastic 3 (179 aa).

Residues 1–58 (MASSATMLSSVATAARAAPAQASMVAPFVGLKSASAFPVTQKPATGLSTLPSNGGRVQ) constitute a chloroplast transit peptide.

This sequence belongs to the RuBisCO small chain family. Heterohexadecamer of 8 large and 8 small subunits.

It is found in the plastid. Its subcellular location is the chloroplast. Functionally, ruBisCO catalyzes two reactions: the carboxylation of D-ribulose 1,5-bisphosphate, the primary event in carbon dioxide fixation, as well as the oxidative fragmentation of the pentose substrate. Both reactions occur simultaneously and in competition at the same active site. Although the small subunit is not catalytic it is essential for maximal activity. This Fritillaria agrestis (Stinkbells) protein is Ribulose bisphosphate carboxylase small subunit, chloroplastic 3.